The chain runs to 162 residues: Larval cuticle protein F1 (162 aa).

Tandem repeats lie at residues 27 to 30 (AAPV), 43 to 46 (AAPV), 59 to 62 (AAPV), and 75 to 78 (AAPA).

In terms of biological role, component of the larval cuticle. In Tenebrio molitor (Yellow mealworm beetle), this protein is Larval cuticle protein F1.